A 142-amino-acid chain; its full sequence is ATP synthase epsilon chain (142 aa).

This sequence belongs to the ATPase epsilon chain family. In terms of assembly, F-type ATPases have 2 components, CF(1) - the catalytic core - and CF(0) - the membrane proton channel. CF(1) has five subunits: alpha(3), beta(3), gamma(1), delta(1), epsilon(1). CF(0) has three main subunits: a, b and c.

The protein resides in the cell inner membrane. Functionally, produces ATP from ADP in the presence of a proton gradient across the membrane. The protein is ATP synthase epsilon chain of Actinobacillus succinogenes (strain ATCC 55618 / DSM 22257 / CCUG 43843 / 130Z).